A 245-amino-acid chain; its full sequence is Pathogenesis-related thaumatin-like protein 3.6 (245 aa).

A signal peptide spans 1–19; the sequence is GSIPFWIALIASFSVFLQG. Cystine bridges form between C33-C226, C74-C84, C89-C95, C142-C215, C148-C198, C156-C166, C170-C179, and C180-C185. An N-linked (GlcNAc...) asparagine glycan is attached at N90. N186 is a glycosylation site (N-linked (GlcNAc...) asparagine).

This sequence belongs to the thaumatin family. Mostly expressed in strobili, and, to a lower extent, in roots of seedlings and saplings.

Functionally, may be involved in disease resistance. This is Pathogenesis-related thaumatin-like protein 3.6 from Cryptomeria japonica (Japanese cedar).